The chain runs to 141 residues: Sigma factor binding protein 2, chloroplastic (141 aa).

Residues 1-20 (MDQSSSTLLINQRKSSSSPT) are compositionally biased toward polar residues. A disordered region spans residues 1 to 36 (MDQSSSTLLINQRKSSSSPTRIPPKQKRKSTTTHKP). A chloroplast-targeting transit peptide spans 1–38 (MDQSSSTLLINQRKSSSSPTRIPPKQKRKSTTTHKPIK). Positions 13–29 (RKSSSSPTRIPPKQKRK) match the Bipartite nuclear localization signal motif. Residues 24 to 36 (PKQKRKSTTTHKP) show a composition bias toward basic residues. The VQ motif lies at 55–64 (FRELVQELTG).

Interacts with sigma factors in chloroplast. Interacts with WRKY33 in the nucleus.

It is found in the plastid. Its subcellular location is the chloroplast. The protein localises to the nucleus. Functions as activator of WRKY33 in plant defense against necrotrophic pathogens by stimulating the DNA-binding activity of WRKY33. The sequence is that of Sigma factor binding protein 2, chloroplastic (SIB2) from Arabidopsis thaliana (Mouse-ear cress).